The chain runs to 297 residues: Large ribosomal subunit protein uL3 (297 aa).

Disordered regions lie at residues 124–143 (NQKI…PVRQ) and 258–297 (MKEK…DKGE).

It belongs to the universal ribosomal protein uL3 family. As to quaternary structure, part of the 50S ribosomal subunit. Forms a cluster with proteins L14 and L19.

One of the primary rRNA binding proteins, it binds directly near the 3'-end of the 23S rRNA, where it nucleates assembly of the 50S subunit. The polypeptide is Large ribosomal subunit protein uL3 (Mycoplasma mobile (strain ATCC 43663 / 163K / NCTC 11711) (Mesomycoplasma mobile)).